The following is a 547-amino-acid chain: Chaperonin GroEL (547 aa).

ATP-binding positions include 30–33, lysine 51, 87–91, glycine 415, 479–481, and aspartate 495; these read TLGP, DGTTT, and NAA. Residues 524–547 are disordered; it reads APKKDEPTPPAAGGGMGGMGGMDF. Residues 535-547 are compositionally biased toward gly residues; the sequence is AGGGMGGMGGMDF.

This sequence belongs to the chaperonin (HSP60) family. As to quaternary structure, forms a cylinder of 14 subunits composed of two heptameric rings stacked back-to-back. Interacts with the co-chaperonin GroES.

The protein localises to the cytoplasm. It catalyses the reaction ATP + H2O + a folded polypeptide = ADP + phosphate + an unfolded polypeptide.. Together with its co-chaperonin GroES, plays an essential role in assisting protein folding. The GroEL-GroES system forms a nano-cage that allows encapsulation of the non-native substrate proteins and provides a physical environment optimized to promote and accelerate protein folding. The sequence is that of Chaperonin GroEL from Xylella fastidiosa (strain 9a5c).